The chain runs to 204 residues: RNA-free ribonuclease P (204 aa).

It belongs to the HARP family.

The enzyme catalyses Endonucleolytic cleavage of RNA, removing 5'-extranucleotides from tRNA precursor.. Its function is as follows. RNA-free RNase P that catalyzes the removal of the 5'-leader sequence from pre-tRNA to produce the mature 5'-terminus. This Pyrococcus horikoshii (strain ATCC 700860 / DSM 12428 / JCM 9974 / NBRC 100139 / OT-3) protein is RNA-free ribonuclease P.